An 89-amino-acid polypeptide reads, in one-letter code: RNA-binding protein Hfq (89 aa).

The region spanning 9 to 68 (EPFLNALRKEKVPVSIYLVNGIKLQGQIESFDQFVILLRNNVNQMVYKHAISTVVPARNV) is the Sm domain. A disordered region spans residues 70-89 (TAPPVPTETHAQSSEEFGNI). Positions 78–89 (THAQSSEEFGNI) are enriched in polar residues.

It belongs to the Hfq family. As to quaternary structure, homohexamer.

Its function is as follows. RNA chaperone that binds small regulatory RNA (sRNAs) and mRNAs to facilitate mRNA translational regulation in response to envelope stress, environmental stress and changes in metabolite concentrations. Also binds with high specificity to tRNAs. The chain is RNA-binding protein Hfq from Alkalilimnicola ehrlichii (strain ATCC BAA-1101 / DSM 17681 / MLHE-1).